Reading from the N-terminus, the 65-residue chain is Large ribosomal subunit protein bL35 (65 aa).

Residues 1-16 (MPKMKTKSGAKKRFRV) are compositionally biased toward basic residues. The disordered stretch occupies residues 1–25 (MPKMKTKSGAKKRFRVRPGGTVKRG).

The protein belongs to the bacterial ribosomal protein bL35 family.

This is Large ribosomal subunit protein bL35 from Herminiimonas arsenicoxydans.